A 196-amino-acid chain; its full sequence is Small ribosomal subunit protein uS4c (196 aa).

The disordered stretch occupies residues Ala17–Phe36. The 81-residue stretch at Met89–Leu169 folds into the S4 RNA-binding domain.

This sequence belongs to the universal ribosomal protein uS4 family. As to quaternary structure, part of the 30S ribosomal subunit. Contacts protein S5. The interaction surface between S4 and S5 is involved in control of translational fidelity.

The protein resides in the plastid. Its subcellular location is the chloroplast. Its function is as follows. One of the primary rRNA binding proteins, it binds directly to 16S rRNA where it nucleates assembly of the body of the 30S subunit. With S5 and S12 plays an important role in translational accuracy. This Festuca gigantea (Giant fescue) protein is Small ribosomal subunit protein uS4c (rps4).